A 740-amino-acid polypeptide reads, in one-letter code: Elongation factor 2 (740 aa).

The 246-residue stretch at 18–263 (EQVRNIGIIA…MVVRWVPNPR (246 aa)) folds into the tr-type G domain. GTP is bound by residues 27–34 (AHVDHGKT), 93–97 (DTPGH), and 147–150 (NKVD). H606 is subject to Diphthamide.

Belongs to the TRAFAC class translation factor GTPase superfamily. Classic translation factor GTPase family. EF-G/EF-2 subfamily.

Its subcellular location is the cytoplasm. Functionally, catalyzes the GTP-dependent ribosomal translocation step during translation elongation. During this step, the ribosome changes from the pre-translocational (PRE) to the post-translocational (POST) state as the newly formed A-site-bound peptidyl-tRNA and P-site-bound deacylated tRNA move to the P and E sites, respectively. Catalyzes the coordinated movement of the two tRNA molecules, the mRNA and conformational changes in the ribosome. This is Elongation factor 2 from Ignicoccus hospitalis (strain KIN4/I / DSM 18386 / JCM 14125).